We begin with the raw amino-acid sequence, 157 residues long: Crossover junction endodeoxyribonuclease RuvC (157 aa).

Residues Asp-7, Glu-67, and Asp-140 contribute to the active site. 3 residues coordinate Mg(2+): Asp-7, Glu-67, and Asp-140.

It belongs to the RuvC family. In terms of assembly, homodimer which binds Holliday junction (HJ) DNA. The HJ becomes 2-fold symmetrical on binding to RuvC with unstacked arms; it has a different conformation from HJ DNA in complex with RuvA. In the full resolvosome a probable DNA-RuvA(4)-RuvB(12)-RuvC(2) complex forms which resolves the HJ. Mg(2+) serves as cofactor.

Its subcellular location is the cytoplasm. It catalyses the reaction Endonucleolytic cleavage at a junction such as a reciprocal single-stranded crossover between two homologous DNA duplexes (Holliday junction).. Its function is as follows. The RuvA-RuvB-RuvC complex processes Holliday junction (HJ) DNA during genetic recombination and DNA repair. Endonuclease that resolves HJ intermediates. Cleaves cruciform DNA by making single-stranded nicks across the HJ at symmetrical positions within the homologous arms, yielding a 5'-phosphate and a 3'-hydroxyl group; requires a central core of homology in the junction. The consensus cleavage sequence is 5'-(A/T)TT(C/G)-3'. Cleavage occurs on the 3'-side of the TT dinucleotide at the point of strand exchange. HJ branch migration catalyzed by RuvA-RuvB allows RuvC to scan DNA until it finds its consensus sequence, where it cleaves and resolves the cruciform DNA. This chain is Crossover junction endodeoxyribonuclease RuvC, found in Rickettsia africae (strain ESF-5).